Reading from the N-terminus, the 536-residue chain is Thiamine transport system permease protein ThiP (536 aa).

A run of 12 helical transmembrane segments spans residues 16 to 36, 58 to 78, 95 to 115, 134 to 154, 199 to 219, 240 to 260, 291 to 311, 334 to 354, 373 to 393, 404 to 424, 463 to 483, and 506 to 526; these read GLCA…ALWL, FSFW…VFLA, LCAM…LSVY, FSPY…LPMA, VAAL…SLGG, PARA…LVLL, DALL…AVVV, SLRI…MLLW, LSGM…FFLL, ADGI…LKVL, AQAL…VALF, and DGAV…TLIE. The 206-residue stretch at 56 to 261 folds into the ABC transmembrane type-1 1 domain; sequence VRFSFWQAFL…VCCLALVLLS (206 aa). Positions 331 to 525 constitute an ABC transmembrane type-1 2 domain; sequence VWTSLRIALA…LLCFTLFTLI (195 aa).

This sequence belongs to the binding-protein-dependent transport system permease family. As to quaternary structure, the complex is composed of two ATP-binding proteins (ThiQ), two transmembrane proteins (ThiP) and a solute-binding protein (ThiB).

It localises to the cell inner membrane. In terms of biological role, part of the ABC transporter complex ThiBPQ involved in thiamine import. Probably responsible for the translocation of the substrate across the membrane. Is also involved in thiamine pyrophosphate transport. This chain is Thiamine transport system permease protein ThiP, found in Salmonella typhimurium (strain LT2 / SGSC1412 / ATCC 700720).